A 427-amino-acid chain; its full sequence is Acetyl-CoA acetyltransferase, mitochondrial (427 aa).

The transit peptide at 1-33 (MAVLAALLRSGARSRSPLLRRLVQEIRYVERSY) directs the protein to the mitochondrion. The residue at position 66 (Lys66) is an N6-acetyllysine; alternate. Residue Lys66 is modified to N6-succinyllysine; alternate. The residue at position 78 (Lys78) is an N6-succinyllysine. The active-site Acyl-thioester intermediate is Cys126. Lys174, Lys181, Lys190, and Lys202 each carry N6-acetyllysine; alternate. N6-succinyllysine; alternate is present on residues Lys174, Lys181, Lys190, and Lys202. A CoA-binding site is contributed by Tyr219. Tyr219 is a K(+) binding site. 2 positions are modified to N6-acetyllysine; alternate: Lys223 and Lys230. Lys223 and Lys230 each carry N6-succinyllysine; alternate. An N6-succinyllysine modification is found at Lys243. An N6-acetyllysine mark is found at Lys251 and Lys257. Residues 258-260 (RVD) and Lys263 each bind CoA. Lys263 bears the N6-acetyllysine; alternate mark. Lys263 is subject to N6-succinyllysine; alternate. An N6-succinyllysine mark is found at Lys266 and Lys268. Residue Lys273 is modified to N6-acetyllysine. 3 residues coordinate K(+): Ala280, Ala281, and Ala283. Position 284 (Ser284) interacts with CoA. Lys338 is modified (N6-acetyllysine). Val381 contributes to the K(+) binding site. The active-site Proton donor/acceptor is the Cys413.

It belongs to the thiolase-like superfamily. Thiolase family. In terms of assembly, homotetramer. Post-translationally, succinylation at Lys-268, adjacent to a coenzyme A binding site. Desuccinylated by SIRT5.

The protein localises to the mitochondrion. The catalysed reaction is 2 acetyl-CoA = acetoacetyl-CoA + CoA. It catalyses the reaction propanoyl-CoA + acetyl-CoA = 2-methyl-3-oxobutanoyl-CoA + CoA. It participates in lipid metabolism; fatty acid beta-oxidation. With respect to regulation, activated by potassium ions, but not sodium ions. In terms of biological role, this is one of the enzymes that catalyzes the last step of the mitochondrial beta-oxidation pathway, an aerobic process breaking down fatty acids into acetyl-CoA. Using free coenzyme A/CoA, catalyzes the thiolytic cleavage of medium- to long-chain 3-oxoacyl-CoAs into acetyl-CoA and a fatty acyl-CoA shortened by two carbon atoms. The activity of the enzyme is reversible and it can also catalyze the condensation of two acetyl-CoA molecules into acetoacetyl-CoA. Thereby, it plays a major role in ketone body metabolism. The protein is Acetyl-CoA acetyltransferase, mitochondrial (ACAT1) of Homo sapiens (Human).